Reading from the N-terminus, the 780-residue chain is Catenin beta-1 (780 aa).

Positions 34 to 56 (GIHSGATTTAPSLSGKGNPEDDD) are disordered. 10 ARM repeats span residues 140–179 (NYQDDAELATRAIPELTKLLNDEDQVVVNKAAVMVHQLSK), 224–263 (REGLLAIFKSGGIPALVKMLGSPVDSVLFYAITTLHNLLL), 266–305 (EGAKMAVRLAGGLQKMVALLNKTNVKFLAITTDCLQILAY), 350–389 (SSNKPAIVEAGGMQALGLHLTDPSQRLVQNCLWTLRNLSD), 399–430 (GLLGTLVQLLGSDDINVVTCAAGILSNLTCNN), 431–472 (YKNK…HLTS), 478–518 (EMAQ…NLAL), 520–561 (PANH…QFVE), 583–622 (IHNRIVIRGLNTIPLFVQLLYSPIENIQRVAAGVLCELAQ), and 624–663 (KEAAEAIEAEGATAPLTELLHSRNEGVATYAAAVLFRMSE). Residues 735–744 (EHEMAGHHPG) show a composition bias toward basic and acidic residues. Residues 735 to 770 (EHEMAGHHPGPDYPVDGLPDLGHTQDLIDGLPPGDS) form a disordered region.

It belongs to the beta-catenin family. Interacts with adnpa. Interacts with cdh1 during oogenesis and in the unfertilized egg. Interacts with ctnna1 and cdh2. Phosphorylation by gsk3b promotes ubiquitination and subsequent degradation by the proteasome. In terms of processing, ubiquitinated when phosphorylated by gsk3b, leading to its degradation. As to expression, expressed in the successional lamina, also expressed in both the epithelial and mesenchymal cells of the developing replacement tooth (at protein level). Expressed in the enamel organ as well as in the inner and outer dental epithelium during replacement tooth morphogenesis (at protein level). Expressed in the differentiated, polarized odontoblasts that line the dentine matrix as well as in the inner and outer dental epithelium during tooth cytodifferentiation (at protein level). Expressed in the reduced enamel organ, odontoblasts and weakly at the center of the dental papilla of the functional tooth as well as in the epithelial crypts surrounding the functional tooth (at protein level). Expressed in the liver (at protein level). Expressed at intercalated disks in the heart (at protein level). Expressed in the ovary.

Its subcellular location is the cytoplasm. The protein localises to the nucleus. It localises to the cell membrane. The protein resides in the cell junction. It is found in the adherens junction. Key downstream component of the canonical Wnt signaling pathway. In the absence of Wnt, forms a complex with axin1, axin2, apc, csnk1a1 and gsk3b that promotes phosphorylation on N-terminal Ser and Thr residues and ubiquitination of ctnnb1 and its subsequent degradation by the proteasome. In the presence of Wnt ligand, ctnnb1 is not ubiquitinated and accumulates in the nucleus, where it acts as a coactivator for transcription factors of the TCF/LEF family, leading to activate Wnt responsive genes. Plays a key role in dorsoventral patterning: in prospective ventral blastomeres, its down-regulation by axin1 and axin2 leads to inhibit the Wnt signaling pathway, while in prospective dorsal blastomeres, degradation of axin results in stabilization and nuclear translocation of ctnnb1. The protein is Catenin beta-1 of Danio rerio (Zebrafish).